Here is an 825-residue protein sequence, read N- to C-terminus: NT-3 growth factor receptor (825 aa).

Residues 1–31 form the signal peptide; that stretch reads MDVSLCPAKCSFWRIFLLGSVWLDYVGSVLA. 2 cysteine pairs are disulfide-bonded: Cys32/Cys38 and Cys36/Cys45. Over 32-429 the chain is Extracellular; the sequence is CPANCVCSKT…TVTHKPEEDT (398 aa). 3 N-linked (GlcNAc...) asparagine glycosylation sites follow: Asn68, Asn72, and Asn79. 2 LRR repeats span residues 104–125 and 128–149; these read GLQK…AFAK and HLRY…LFQT. N-linked (GlcNAc...) asparagine glycosylation is found at Asn133 and Asn163. The LRRCT domain occupies 160–209; it reads NFFNCSCDIRWMQLWQEQGEAKLNSQNLYCINTDGSQLPLFRMNISQCDL. Disulfide bonds link Cys164-Cys189 and Cys166-Cys207. N-linked (GlcNAc...) asparagine glycans are attached at residues Asn203, Asn218, Asn232, Asn259, Asn267, Asn272, and Asn294. 2 consecutive Ig-like C2-type domains span residues 210–300 and 309–382; these read PEIS…VALT and SLEE…IAKN. An intrachain disulfide couples Cys231 to Cys284. Cys320 and Cys362 are disulfide-bonded. Asn375 and Asn388 each carry an N-linked (GlcNAc...) asparagine glycan. Residues 430–453 form a helical membrane-spanning segment; it reads FGVSIAVGLAAFACVLLVVLFVMI. The Cytoplasmic portion of the chain corresponds to 454–825; sequence NKYGRRSKFG…ATPIYLDILG (372 aa). Ser493 is subject to Phosphoserine. Phosphotyrosine; by autocatalysis is present on Tyr516. Residues 538–825 enclose the Protein kinase domain; sequence IVLKRELGEG…ATPIYLDILG (288 aa). ATP contacts are provided by residues 544–552 and Lys572; that span reads LGEGAFGKV. Asp679 functions as the Proton acceptor in the catalytic mechanism. Phosphotyrosine; by autocatalysis occurs at positions 705, 709, and 710.

This sequence belongs to the protein kinase superfamily. Tyr protein kinase family. Insulin receptor subfamily. Exists in a dynamic equilibrium between monomeric (low affinity) and dimeric (high affinity) structures. Binds SH2B2. Interacts with SQSTM1 and KIDINS220. Interacts with PTPRS. Interacts with MAPK8IP3/JIP3. Post-translationally, ligand-mediated auto-phosphorylation.

It localises to the membrane. It carries out the reaction L-tyrosyl-[protein] + ATP = O-phospho-L-tyrosyl-[protein] + ADP + H(+). Functionally, receptor tyrosine kinase involved in nervous system and probably heart development. Upon binding of its ligand NTF3/neurotrophin-3, NTRK3 autophosphorylates and activates different signaling pathways, including the phosphatidylinositol 3-kinase/AKT and the MAPK pathways, that control cell survival and differentiation. The polypeptide is NT-3 growth factor receptor (NTRK3) (Pan troglodytes (Chimpanzee)).